The chain runs to 138 residues: Sporulation-specific protein 13 (138 aa).

Residues 1 to 11 are compositionally biased toward polar residues; that stretch reads MMSNSQISKLF. The tract at residues 1–31 is disordered; that stretch reads MMSNSQISKLFSSISNKENSNENALKESTNK. Residues 12–23 are compositionally biased toward low complexity; the sequence is SSISNKENSNEN. Residues 16-104 are a coiled coil; the sequence is NKENSNENAL…KRELDYLRAK (89 aa).

Interacts with spo2.

It is found in the cytoplasm. Its subcellular location is the cytoskeleton. The protein resides in the microtubule organizing center. It localises to the spindle pole body. In terms of biological role, involved in sporulation. Plays a significant role in modification of the spindle pole body prior to spore formation and is required for initiating forespore membrane formation. The sequence is that of Sporulation-specific protein 13 (spo13) from Schizosaccharomyces pombe (strain 972 / ATCC 24843) (Fission yeast).